Consider the following 940-residue polypeptide: Isoleucine--tRNA ligase (940 aa).

Positions 58-68 (PYANGAIHIGH) match the 'HIGH' region motif. Glu564 is an L-isoleucyl-5'-AMP binding site. The 'KMSKS' region motif lies at 605 to 609 (KMSKS). Lys608 contacts ATP. Zn(2+)-binding residues include Cys903, Cys906, Cys923, and Cys926.

The protein belongs to the class-I aminoacyl-tRNA synthetase family. IleS type 1 subfamily. In terms of assembly, monomer. The cofactor is Zn(2+).

The protein resides in the cytoplasm. The enzyme catalyses tRNA(Ile) + L-isoleucine + ATP = L-isoleucyl-tRNA(Ile) + AMP + diphosphate. Its function is as follows. Catalyzes the attachment of isoleucine to tRNA(Ile). As IleRS can inadvertently accommodate and process structurally similar amino acids such as valine, to avoid such errors it has two additional distinct tRNA(Ile)-dependent editing activities. One activity is designated as 'pretransfer' editing and involves the hydrolysis of activated Val-AMP. The other activity is designated 'posttransfer' editing and involves deacylation of mischarged Val-tRNA(Ile). The sequence is that of Isoleucine--tRNA ligase from Nitrosococcus oceani (strain ATCC 19707 / BCRC 17464 / JCM 30415 / NCIMB 11848 / C-107).